The chain runs to 377 residues: Phosphatidylglycerol--prolipoprotein diacylglyceryl transferase (377 aa).

The next 4 helical transmembrane spans lie at 18 to 38 (PVPL…AVVV), 48 to 68 (MDPA…IVGA), 93 to 113 (IWNG…GAWL), and 119 to 139 (GISL…AQAI). Arg141 provides a ligand contact to a 1,2-diacyl-sn-glycero-3-phospho-(1'-sn-glycerol). The next 3 helical transmembrane spans lie at 177–197 (QPTF…LLLV), 208–228 (LFAL…MLRI), and 238–258 (RVNI…LLVV). Positions 265–377 (DVSPQEQRAL…RTRVERPPAT (113 aa)) are disordered. 2 stretches are compositionally biased toward low complexity: residues 288–297 (AAGETAGETR) and 308–344 (GVDV…DADG).

It belongs to the Lgt family.

The protein resides in the cell membrane. The catalysed reaction is L-cysteinyl-[prolipoprotein] + a 1,2-diacyl-sn-glycero-3-phospho-(1'-sn-glycerol) = an S-1,2-diacyl-sn-glyceryl-L-cysteinyl-[prolipoprotein] + sn-glycerol 1-phosphate + H(+). The protein operates within protein modification; lipoprotein biosynthesis (diacylglyceryl transfer). Functionally, catalyzes the transfer of the diacylglyceryl group from phosphatidylglycerol to the sulfhydryl group of the N-terminal cysteine of a prolipoprotein, the first step in the formation of mature lipoproteins. This is Phosphatidylglycerol--prolipoprotein diacylglyceryl transferase from Frankia alni (strain DSM 45986 / CECT 9034 / ACN14a).